The chain runs to 82 residues: Beta-neurotoxin Css9 (82 aa).

An N-terminal signal peptide occupies residues Met1–Ser17. Residues Lys18–Arg81 enclose the LCN-type CS-alpha/beta domain. Intrachain disulfides connect Cys28–Cys80, Cys32–Cys54, Cys39–Cys61, and Cys43–Cys63.

It belongs to the long (4 C-C) scorpion toxin superfamily. Sodium channel inhibitor family. Beta subfamily. As to expression, expressed by the venom gland.

The protein resides in the secreted. Its function is as follows. Beta toxins bind voltage-independently at site-4 of sodium channels (Nav) and shift the voltage of activation toward more negative potentials thereby affecting sodium channel activation and promoting spontaneous and repetitive firing. This toxin compete with high affinity with 125I-Css4 bound on rat brain synaptosome and may bind with high affinity to Nav1.1/SCN1A, Nav1.2/SCN2A and Nav1.6/SCN8A. The chain is Beta-neurotoxin Css9 from Centruroides suffusus (Durango bark scorpion).